A 630-amino-acid chain; its full sequence is DNA mismatch repair protein MutL (630 aa).

Disordered stretches follow at residues 361 to 386 (VLSS…APAE) and 407 to 431 (FERK…GQAE). Residues 407–421 (FERKQEEEVGEERCS) are compositionally biased toward basic and acidic residues.

It belongs to the DNA mismatch repair MutL/HexB family.

Functionally, this protein is involved in the repair of mismatches in DNA. It is required for dam-dependent methyl-directed DNA mismatch repair. May act as a 'molecular matchmaker', a protein that promotes the formation of a stable complex between two or more DNA-binding proteins in an ATP-dependent manner without itself being part of a final effector complex. This chain is DNA mismatch repair protein MutL, found in Geobacillus kaustophilus (strain HTA426).